We begin with the raw amino-acid sequence, 464 residues long: Protein FAM90A3 (464 aa).

3 disordered regions span residues 1 to 42 (MMAR…DPRL), 70 to 389 (PATL…HDGA), and 411 to 437 (APSFHSPEKPGAFLAQSPHVSEKSEAP). Basic and acidic residues-rich tracts occupy residues 74–89 (GKKEGKENLKPWKPRV) and 97–114 (NKDKGEKEERPRQQDPQR). Residues 180–197 (LASLSPLRKASLSSSSSL) are compositionally biased toward low complexity.

It belongs to the FAM90 family.

This is Protein FAM90A3 from Homo sapiens (Human).